The chain runs to 487 residues: L-tartrate/succinate antiporter (487 aa).

14 helical membrane-spanning segments follow: residues Y10–E30, T33–P53, G54–F74, W93–G113, T137–S157, I189–L209, L230–V250, L292–V312, G313–S333, V340–I360, S370–L390, F393–L413, I418–T438, and I465–V485.

This sequence belongs to the SLC13A/DASS transporter (TC 2.A.47) family. DIT1 subfamily.

The protein resides in the cell inner membrane. It catalyses the reaction (2R,3R)-tartrate(out) + succinate(in) = (2R,3R)-tartrate(in) + succinate(out). Functionally, catalyzes the uptake of tartrate in exchange for intracellular succinate. Essential for anaerobic L-tartrate fermentation. This Shigella dysenteriae serotype 1 (strain Sd197) protein is L-tartrate/succinate antiporter (ttdT).